A 297-amino-acid polypeptide reads, in one-letter code: Nucleotide-binding protein BTH_I0482 (297 aa).

8 to 15 (GISGSGKS) lines the ATP pocket. 57–60 (DARS) is a GTP binding site.

The protein belongs to the RapZ-like family.

Its function is as follows. Displays ATPase and GTPase activities. This chain is Nucleotide-binding protein BTH_I0482, found in Burkholderia thailandensis (strain ATCC 700388 / DSM 13276 / CCUG 48851 / CIP 106301 / E264).